We begin with the raw amino-acid sequence, 239 residues long: Ankyrin repeat domain-containing protein 49 (239 aa).

Serine 49 is modified (phosphoserine). ANK repeat units follow at residues 73 to 103 (DPSR…HVNT), 107 to 136 (DEYT…DVHA), 140 to 169 (DGWT…DINA), and 173 to 206 (GLLT…GLKN).

Widely expressed in fetus, at a high level in fetal liver, brain and lung.

The protein localises to the nucleus. Its function is as follows. Induces HBG1 expression. May have a role in spermatogenesis where it promotes autophagy in response to serum starvation, via the NF-kappaB pathway. In Homo sapiens (Human), this protein is Ankyrin repeat domain-containing protein 49 (ANKRD49).